The primary structure comprises 682 residues: Potassium-transporting ATPase ATP-binding subunit (682 aa).

5 helical membrane passes run 15 to 35 (AALF…AKLA), 42 to 62 (SPVM…TASG), 66 to 86 (AGFG…GNFA), 233 to 253 (LTFL…GVTL), and 257 to 277 (LLIA…LPAI). Catalysis depends on aspartate 310, which acts as the 4-aspartylphosphate intermediate. ATP is bound by residues aspartate 347, glutamate 351, 377–384 (FTAQTRMS), and lysine 395. Residues aspartate 518 and aspartate 522 each coordinate Mg(2+). 3 consecutive transmembrane segments (helical) span residues 588 to 608 (FAIL…LNVM), 616 to 636 (AVLA…PLAL), and 662 to 682 (VLLP…VLGA).

It belongs to the cation transport ATPase (P-type) (TC 3.A.3) family. Type IA subfamily. In terms of assembly, the system is composed of three essential subunits: KdpA, KdpB and KdpC.

It is found in the cell inner membrane. It carries out the reaction K(+)(out) + ATP + H2O = K(+)(in) + ADP + phosphate + H(+). Its function is as follows. Part of the high-affinity ATP-driven potassium transport (or Kdp) system, which catalyzes the hydrolysis of ATP coupled with the electrogenic transport of potassium into the cytoplasm. This subunit is responsible for energy coupling to the transport system and for the release of the potassium ions to the cytoplasm. The protein is Potassium-transporting ATPase ATP-binding subunit of Xanthomonas axonopodis pv. citri (strain 306).